Here is a 331-residue protein sequence, read N- to C-terminus: MAVRKPPITTREYWAPGHAACAGCGCAIALKLATKAFSEAMEEKYGDPNAFAIAQATGCMEVVSAVFPYTAWKVPWIHVAFENAAAAASGVEAAWKKLGIKGKILAIGGDGGTADIGLQALSGMLERGHNVVYLMYDNEAYMNTGIQRSSSTPYGAWTTTSPPGKYSIGEDRPKKWVALIAAAHQIPYAATASIGNPFDLVKKVKKAAKVDGPAFIQVHCTCPTGWRTPLEKGVEIARLAIETGMWPLFEIENGDIWNIKIQPPGGGAKVYKEGGRVVRIEFKKPIEEYLKYQGRFKHLFKRPEAIEELRNQIKAMWKVLGVEAILPRPEE.

Residues Cys-21, Cys-24, Cys-59, and Cys-222 each coordinate [4Fe-4S] cluster.

Heterotetramer of one alpha, one beta, one delta and one gamma chain. [4Fe-4S] cluster serves as cofactor.

It carries out the reaction 2 oxidized [2Fe-2S]-[ferredoxin] + pyruvate + CoA = 2 reduced [2Fe-2S]-[ferredoxin] + acetyl-CoA + CO2 + H(+). The chain is Pyruvate synthase subunit PorB (porB) from Pyrococcus horikoshii (strain ATCC 700860 / DSM 12428 / JCM 9974 / NBRC 100139 / OT-3).